A 666-amino-acid polypeptide reads, in one-letter code: Transketolase (666 aa).

His26 is a binding site for substrate. Thiamine diphosphate is bound by residues His66 and 114–116 (GPL). Residue Asp155 participates in Mg(2+) binding. Residues Gly156 and Asn185 each contribute to the thiamine diphosphate site. Asn185 and Ile187 together coordinate Mg(2+). Residues His261, Arg358, and Ser385 each coordinate substrate. Residue His261 participates in thiamine diphosphate binding. Glu411 serves as the catalytic Proton donor. Phe437 contributes to the thiamine diphosphate binding site. 3 residues coordinate substrate: His461, Asp469, and Arg520.

Belongs to the transketolase family. In terms of assembly, homodimer. It depends on Mg(2+) as a cofactor. The cofactor is Ca(2+). Requires Mn(2+) as cofactor. Co(2+) serves as cofactor. Thiamine diphosphate is required as a cofactor.

It catalyses the reaction D-sedoheptulose 7-phosphate + D-glyceraldehyde 3-phosphate = aldehydo-D-ribose 5-phosphate + D-xylulose 5-phosphate. Catalyzes the transfer of a two-carbon ketol group from a ketose donor to an aldose acceptor, via a covalent intermediate with the cofactor thiamine pyrophosphate. The polypeptide is Transketolase (tkt) (Buchnera aphidicola subsp. Baizongia pistaciae (strain Bp)).